Reading from the N-terminus, the 642-residue chain is 1-deoxy-D-xylulose-5-phosphate synthase (642 aa).

Thiamine diphosphate contacts are provided by residues His-79 and 120-122 (AHS). Residue Asp-151 coordinates Mg(2+). Residues 152–153 (GS), Asn-180, Tyr-290, and Glu-372 contribute to the thiamine diphosphate site. Position 180 (Asn-180) interacts with Mg(2+).

Belongs to the transketolase family. DXPS subfamily. In terms of assembly, homodimer. The cofactor is Mg(2+). Thiamine diphosphate serves as cofactor.

It catalyses the reaction D-glyceraldehyde 3-phosphate + pyruvate + H(+) = 1-deoxy-D-xylulose 5-phosphate + CO2. The protein operates within metabolic intermediate biosynthesis; 1-deoxy-D-xylulose 5-phosphate biosynthesis; 1-deoxy-D-xylulose 5-phosphate from D-glyceraldehyde 3-phosphate and pyruvate: step 1/1. Catalyzes the acyloin condensation reaction between C atoms 2 and 3 of pyruvate and glyceraldehyde 3-phosphate to yield 1-deoxy-D-xylulose-5-phosphate (DXP). This Beijerinckia indica subsp. indica (strain ATCC 9039 / DSM 1715 / NCIMB 8712) protein is 1-deoxy-D-xylulose-5-phosphate synthase.